The chain runs to 40 residues: Photosystem II reaction center protein J (40 aa).

A helical membrane pass occupies residues 8–28; it reads IPLWLIGTVTGILVIGLIGFF.

The protein belongs to the PsbJ family. In terms of assembly, PSII is composed of 1 copy each of membrane proteins PsbA, PsbB, PsbC, PsbD, PsbE, PsbF, PsbH, PsbI, PsbJ, PsbK, PsbL, PsbM, PsbT, PsbX, PsbY, PsbZ, Psb30/Ycf12, at least 3 peripheral proteins of the oxygen-evolving complex and a large number of cofactors. It forms dimeric complexes.

The protein localises to the plastid. Its subcellular location is the chloroplast thylakoid membrane. In terms of biological role, one of the components of the core complex of photosystem II (PSII). PSII is a light-driven water:plastoquinone oxidoreductase that uses light energy to abstract electrons from H(2)O, generating O(2) and a proton gradient subsequently used for ATP formation. It consists of a core antenna complex that captures photons, and an electron transfer chain that converts photonic excitation into a charge separation. This is Photosystem II reaction center protein J from Zea mays (Maize).